Consider the following 793-residue polypeptide: Protocadherin beta-7 (793 aa).

The first 26 residues, 1–26, serve as a signal peptide directing secretion; sequence MEARVERAVQKRQVLFLCVFLGMSWA. Over 27-688 the chain is Extracellular; it reads GAEPLRYFVA…DQANLLTVYL (662 aa). Cadherin domains are found at residues 35 to 133, 138 to 242, 247 to 347, 352 to 451, and 456 to 561; these read VAEE…APVF, ISLK…APDF, YKVQ…RPEL, LTSP…APAF, and YTLF…SPFV. A glycan (N-linked (GlcNAc...) asparagine) is linked at Asn-169. Asn-418 and Asn-436 each carry an N-linked (GlcNAc...) asparagine glycan. Asn-567 is a glycosylation site (N-linked (GlcNAc...) asparagine). One can recognise a Cadherin 6 domain in the interval 568-671; the sequence is SSAPCTEPLP…LVDGFSQPYL (104 aa). The chain crosses the membrane as a helical span at residues 689–709; sequence VVALASVSSLFLLSVLLFVAV. The Cytoplasmic portion of the chain corresponds to 710-793; it reads RLCRRSRAAP…NRPFQNNLGF (84 aa).

Its subcellular location is the cell membrane. In terms of biological role, potential calcium-dependent cell-adhesion protein. May be involved in the establishment and maintenance of specific neuronal connections in the brain. In Pan troglodytes (Chimpanzee), this protein is Protocadherin beta-7 (PCDHB7).